Here is a 123-residue protein sequence, read N- to C-terminus: Urotensin-2 (123 aa).

The first 20 residues, 1-20 (MDRVPFCCLLFIGLLNPLLS), serve as a signal peptide directing secretion. Propeptides lie at residues 21 to 104 (LPVT…LART) and 107 to 109 (QHK). The interval 57–88 (RQTMGTEAGESPGEAGPSTETPTPRGSMRKAF) is disordered. The cysteines at positions 117 and 122 are disulfide-linked.

Belongs to the urotensin-2 family. Brain specific. Predominantly expressed in motoneurons of the brainstem and spinal cord.

Its subcellular location is the secreted. Functionally, highly potent vasoconstrictor. The chain is Urotensin-2 (Uts2) from Mus musculus (Mouse).